Reading from the N-terminus, the 354-residue chain is 3-isopropylmalate dehydrogenase (354 aa).

Residues Arg-96, Arg-106, Arg-132, and Asp-223 each coordinate substrate. Asp-223, Asp-247, and Asp-251 together coordinate Mg(2+). NAD(+) is bound at residue 283-295 (GSAPDIAGQGKAD).

Belongs to the isocitrate and isopropylmalate dehydrogenases family. LeuB type 2 subfamily. Homodimer. It depends on Mg(2+) as a cofactor. Mn(2+) serves as cofactor.

It localises to the cytoplasm. The enzyme catalyses (2R,3S)-3-isopropylmalate + NAD(+) = 4-methyl-2-oxopentanoate + CO2 + NADH. Its pathway is amino-acid biosynthesis; L-leucine biosynthesis; L-leucine from 3-methyl-2-oxobutanoate: step 3/4. Its function is as follows. Catalyzes the oxidation of 3-carboxy-2-hydroxy-4-methylpentanoate (3-isopropylmalate) to 3-carboxy-4-methyl-2-oxopentanoate. The product decarboxylates to 4-methyl-2 oxopentanoate. The chain is 3-isopropylmalate dehydrogenase from Thermobifida fusca (strain YX).